Reading from the N-terminus, the 267-residue chain is UPF0162 protein HI_1558 (267 aa).

The protein belongs to the UPF0162 family.

The sequence is that of UPF0162 protein HI_1558 from Haemophilus influenzae (strain ATCC 51907 / DSM 11121 / KW20 / Rd).